The chain runs to 1073 residues: Pleckstrin homology domain-containing family G member 5 (1073 aa).

5 disordered regions span residues 1–28 (MGTG…SQLL), 91–135 (VSTR…ARRR), 217–261 (PGDE…ESSL), 278–309 (GEAG…GINE), and 367–388 (SWEE…RLED). Basic and acidic residues-rich tracts occupy residues 217–231 (PGDE…KDSK) and 249–260 (ERVDPQSRRESS). The span at 367–381 (SWEEEEEDDEEDEES) shows a compositional bias: acidic residues. Positions 406–598 (HQQEAVWELL…ERFIHHVNTC (193 aa)) constitute a DH domain. The region spanning 654 to 754 (QLLLEGSLRM…WVDTIYNAQN (101 aa)) is the PH domain. Disordered stretches follow at residues 762–818 (QLSA…TSDG), 833–873 (TLSS…GPVD), and 899–925 (PVVE…TPVQ). Positions 777 to 790 (LEEEEDEQEEEGEE) are enriched in acidic residues. Polar residues-rich tracts occupy residues 791-809 (SGTS…SNSL) and 844-864 (VSSQ…TPTS). Threonine 793 carries the phosphothreonine modification. Phosphoserine is present on serine 798. The span at 900–915 (VVEPAPVPQTPSPQPS) shows a compositional bias: pro residues. Phosphothreonine is present on threonine 909. Serine 911, serine 936, and serine 941 each carry phosphoserine. A disordered region spans residues 993–1046 (MCDPCHGPQLSESENRPSHMTGGPADSARRRCREMPSGTMSRVQSEPPSGVSAQ). The segment covering 1030–1039 (GTMSRVQSEP) has biased composition (polar residues).

In terms of assembly, interacts with GIPC1/synectin and RHOA. Expressed in neurons and glial cells of the peripheral nervous system, with highest levels of expression in the brain and sciatic nerve endoneurium. Isoform 2 is expressed at detectable levels only in malignant cells.

It is found in the cytoplasm. The protein resides in the perinuclear region. Its subcellular location is the cell membrane. The protein localises to the cell junction. It localises to the cell projection. It is found in the lamellipodium. Functionally, functions as a guanine exchange factor (GEF) for RAB26 and thus regulates autophagy of synaptic vesicles in axon terminal of motoneurons. Involved in the control of neuronal cell differentiation. Plays a role in angiogenesis through regulation of endothelial cells chemotaxis. Also affects the migration, adhesion, and matrix/bone degradation in macrophages and osteoclasts. The polypeptide is Pleckstrin homology domain-containing family G member 5 (Plekhg5) (Mus musculus (Mouse)).